The following is a 60-amino-acid chain: Large ribosomal subunit protein bL33 (60 aa).

The protein belongs to the bacterial ribosomal protein bL33 family.

The chain is Large ribosomal subunit protein bL33 from Cytophaga hutchinsonii (strain ATCC 33406 / DSM 1761 / CIP 103989 / NBRC 15051 / NCIMB 9469 / D465).